The primary structure comprises 519 residues: tRNA-2-methylthio-N(6)-dimethylallyladenosine synthase (519 aa).

The segment at 1 to 23 (MNEQQRKQQSQIRTEQANVDRIK) is disordered. The segment covering 7-17 (KQQSQIRTEQA) has biased composition (polar residues). One can recognise an MTTase N-terminal domain in the interval 76–194 (KKFLIRTYGC…LPHLVKEALF (119 aa)). Residues cysteine 85, cysteine 121, cysteine 155, cysteine 231, cysteine 235, and cysteine 238 each contribute to the [4Fe-4S] cluster site. Residues 217–450 (RKGKIKAWVN…VNKQSAASMK (234 aa)) form the Radical SAM core domain. Positions 450–513 (KDYAGKKVKV…TWSLNGVMVE (64 aa)) constitute a TRAM domain.

This sequence belongs to the methylthiotransferase family. MiaB subfamily. As to quaternary structure, monomer. It depends on [4Fe-4S] cluster as a cofactor.

The protein localises to the cytoplasm. It catalyses the reaction N(6)-dimethylallyladenosine(37) in tRNA + (sulfur carrier)-SH + AH2 + 2 S-adenosyl-L-methionine = 2-methylsulfanyl-N(6)-dimethylallyladenosine(37) in tRNA + (sulfur carrier)-H + 5'-deoxyadenosine + L-methionine + A + S-adenosyl-L-homocysteine + 2 H(+). Functionally, catalyzes the methylthiolation of N6-(dimethylallyl)adenosine (i(6)A), leading to the formation of 2-methylthio-N6-(dimethylallyl)adenosine (ms(2)i(6)A) at position 37 in tRNAs that read codons beginning with uridine. This chain is tRNA-2-methylthio-N(6)-dimethylallyladenosine synthase, found in Oceanobacillus iheyensis (strain DSM 14371 / CIP 107618 / JCM 11309 / KCTC 3954 / HTE831).